A 353-amino-acid chain; its full sequence is Nicotinate-nucleotide--dimethylbenzimidazole phosphoribosyltransferase (353 aa).

Glu-319 serves as the catalytic Proton acceptor.

Belongs to the CobT family.

It carries out the reaction 5,6-dimethylbenzimidazole + nicotinate beta-D-ribonucleotide = alpha-ribazole 5'-phosphate + nicotinate + H(+). The protein operates within nucleoside biosynthesis; alpha-ribazole biosynthesis; alpha-ribazole from 5,6-dimethylbenzimidazole: step 1/2. Catalyzes the synthesis of alpha-ribazole-5'-phosphate from nicotinate mononucleotide (NAMN) and 5,6-dimethylbenzimidazole (DMB). This Chlorobaculum tepidum (strain ATCC 49652 / DSM 12025 / NBRC 103806 / TLS) (Chlorobium tepidum) protein is Nicotinate-nucleotide--dimethylbenzimidazole phosphoribosyltransferase.